The chain runs to 186 residues: Ribosome-recycling factor (186 aa).

Belongs to the RRF family.

The protein resides in the cytoplasm. Its function is as follows. Responsible for the release of ribosomes from messenger RNA at the termination of protein biosynthesis. May increase the efficiency of translation by recycling ribosomes from one round of translation to another. This is Ribosome-recycling factor from Paracidovorax citrulli (strain AAC00-1) (Acidovorax citrulli).